A 188-amino-acid chain; its full sequence is Elongation factor P (188 aa).

The protein belongs to the elongation factor P family.

The protein resides in the cytoplasm. The protein operates within protein biosynthesis; polypeptide chain elongation. Its function is as follows. Involved in peptide bond synthesis. Stimulates efficient translation and peptide-bond synthesis on native or reconstituted 70S ribosomes in vitro. Probably functions indirectly by altering the affinity of the ribosome for aminoacyl-tRNA, thus increasing their reactivity as acceptors for peptidyl transferase. The chain is Elongation factor P from Methylobacterium radiotolerans (strain ATCC 27329 / DSM 1819 / JCM 2831 / NBRC 15690 / NCIMB 10815 / 0-1).